We begin with the raw amino-acid sequence, 213 residues long: Urease accessory protein UreG (213 aa).

14–21 is a binding site for GTP; sequence GPVGSGKT.

This sequence belongs to the SIMIBI class G3E GTPase family. UreG subfamily. In terms of assembly, homodimer. UreD, UreF and UreG form a complex that acts as a GTP-hydrolysis-dependent molecular chaperone, activating the urease apoprotein by helping to assemble the nickel containing metallocenter of UreC. The UreE protein probably delivers the nickel.

Its subcellular location is the cytoplasm. Its function is as follows. Facilitates the functional incorporation of the urease nickel metallocenter. This process requires GTP hydrolysis, probably effectuated by UreG. The sequence is that of Urease accessory protein UreG from Mesorhizobium japonicum (strain LMG 29417 / CECT 9101 / MAFF 303099) (Mesorhizobium loti (strain MAFF 303099)).